A 79-amino-acid chain; its full sequence is NAD(P)H-quinone oxidoreductase subunit L (79 aa).

Helical transmembrane passes span 10 to 30 and 48 to 68; these read IIIALIYLSLSVLYLLVIPAV and GFMYFLMSFFFPGMLLLSPFL.

This sequence belongs to the complex I NdhL subunit family. In terms of assembly, NDH-1 can be composed of about 15 different subunits; different subcomplexes with different compositions have been identified which probably have different functions.

The protein resides in the cellular thylakoid membrane. The catalysed reaction is a plastoquinone + NADH + (n+1) H(+)(in) = a plastoquinol + NAD(+) + n H(+)(out). The enzyme catalyses a plastoquinone + NADPH + (n+1) H(+)(in) = a plastoquinol + NADP(+) + n H(+)(out). In terms of biological role, NDH-1 shuttles electrons from an unknown electron donor, via FMN and iron-sulfur (Fe-S) centers, to quinones in the respiratory and/or the photosynthetic chain. The immediate electron acceptor for the enzyme in this species is believed to be plastoquinone. Couples the redox reaction to proton translocation, and thus conserves the redox energy in a proton gradient. Cyanobacterial NDH-1 also plays a role in inorganic carbon-concentration. The polypeptide is NAD(P)H-quinone oxidoreductase subunit L (Microcystis aeruginosa (strain NIES-843 / IAM M-2473)).